Here is a 421-residue protein sequence, read N- to C-terminus: Tyrosine--tRNA ligase (421 aa).

Position 38 (Tyr38) interacts with L-tyrosine. The short motif at 43–52 (PTGDSLHIGH) is the 'HIGH' region element. L-tyrosine-binding residues include Tyr169 and Gln173. The 'KMSKS' region motif lies at 231–235 (KFGKS). Lys234 lines the ATP pocket. The S4 RNA-binding domain maps to 353–419 (KNLVDFLVDT…GKKKYTLVHI (67 aa)).

Belongs to the class-I aminoacyl-tRNA synthetase family. TyrS type 1 subfamily. In terms of assembly, homodimer.

It localises to the cytoplasm. It carries out the reaction tRNA(Tyr) + L-tyrosine + ATP = L-tyrosyl-tRNA(Tyr) + AMP + diphosphate + H(+). Functionally, catalyzes the attachment of tyrosine to tRNA(Tyr) in a two-step reaction: tyrosine is first activated by ATP to form Tyr-AMP and then transferred to the acceptor end of tRNA(Tyr). This chain is Tyrosine--tRNA ligase, found in Lactobacillus delbrueckii subsp. bulgaricus (strain ATCC 11842 / DSM 20081 / BCRC 10696 / JCM 1002 / NBRC 13953 / NCIMB 11778 / NCTC 12712 / WDCM 00102 / Lb 14).